A 361-amino-acid polypeptide reads, in one-letter code: GDP-mannose 4,6 dehydratase 1 (361 aa).

Residues 23 to 28, 79 to 80, 101 to 105, and tyrosine 116 contribute to the NADP(+) site; these read GITGQD, DL, and LAAQS. Residue serine 150 is part of the active site. Catalysis depends on nucleophile residues glutamate 152 and tyrosine 173. Lysine 177, histidine 203, and arginine 208 together coordinate NADP(+).

It belongs to the NAD(P)-dependent epimerase/dehydratase family. GDP-mannose 4,6-dehydratase subfamily. As to quaternary structure, homotetramer. Requires NADP(+) as cofactor. Expressed in roots,stipules and pollen just before anthesis. Primarily localized to the root meristem and columella root cap. Not expressed in emerging lateral roots.

It catalyses the reaction GDP-alpha-D-mannose = GDP-4-dehydro-alpha-D-rhamnose + H2O. It participates in nucleotide-sugar biosynthesis; GDP-L-fucose biosynthesis via de novo pathway; GDP-L-fucose from GDP-alpha-D-mannose: step 1/2. Functionally, catalyzes the conversion of GDP-D-mannose to GDP-4-dehydro-6-deoxy-D-mannose. The chain is GDP-mannose 4,6 dehydratase 1 (GMD1) from Arabidopsis thaliana (Mouse-ear cress).